Here is a 93-residue protein sequence, read N- to C-terminus: Alpha-defensin 21 (93 aa).

A signal peptide spans 1-19 (MKTLVLLSALILLAYQVQT). Positions 20–58 (DPIQNTDEETNTEEQPGEDDQAVSVSFGGQEGSALHEKL) are excised as a propeptide. The disordered stretch occupies residues 22-43 (IQNTDEETNTEEQPGEDDQAVS). Acidic residues predominate over residues 25 to 40 (TDEETNTEEQPGEDDQ). Disulfide bonds link Cys-64–Cys-89, Cys-66–Cys-81, and Cys-71–Cys-88.

It belongs to the alpha-defensin family.

The protein localises to the secreted. Functionally, may have microbicidal activities. The protein is Alpha-defensin 21 (Defa21) of Mus musculus (Mouse).